A 469-amino-acid chain; its full sequence is Probable ribonuclease FAU-1 (469 aa).

Belongs to the FAU-1 family.

Functionally, probable RNase involved in rRNA stability through maturation and/or degradation of precursor rRNAs. Binds to RNA in loop regions with AU-rich sequences. The sequence is that of Probable ribonuclease FAU-1 from Pyrococcus horikoshii (strain ATCC 700860 / DSM 12428 / JCM 9974 / NBRC 100139 / OT-3).